We begin with the raw amino-acid sequence, 660 residues long: Bifunctional polymyxin resistance protein ArnA (660 aa).

Residues 1 to 304 are formyltransferase ArnAFT; that stretch reads MKTVVFAYHD…MLGLVQGSRL (304 aa). 86–88 is a binding site for (6R)-10-formyltetrahydrofolate; that stretch reads HLI. The active-site Proton donor; for formyltransferase activity is His104. (6R)-10-formyltetrahydrofolate is bound by residues Arg114 and 136-140; that span reads VKRAD. The tract at residues 314–660 is dehydrogenase ArnADH; it reads RRTRVLILGV…RTVDLTDKPS (347 aa). NAD(+)-binding positions include Asp347 and 368–369; that span reads DI. Residues Ala393, Tyr398, and 432 to 433 each bind UDP-alpha-D-glucuronate; that span reads TS. Catalysis depends on Glu434, which acts as the Proton acceptor; for decarboxylase activity. Residues Arg460, Asn492, 526–535, and Tyr613 each bind UDP-alpha-D-glucuronate; that span reads KLIDGGKQKR. Arg619 (proton donor; for decarboxylase activity) is an active-site residue.

It in the N-terminal section; belongs to the Fmt family. UDP-L-Ara4N formyltransferase subfamily. The protein in the C-terminal section; belongs to the NAD(P)-dependent epimerase/dehydratase family. UDP-glucuronic acid decarboxylase subfamily. In terms of assembly, homohexamer, formed by a dimer of trimers.

It catalyses the reaction UDP-alpha-D-glucuronate + NAD(+) = UDP-beta-L-threo-pentopyranos-4-ulose + CO2 + NADH. The catalysed reaction is UDP-4-amino-4-deoxy-beta-L-arabinose + (6R)-10-formyltetrahydrofolate = UDP-4-deoxy-4-formamido-beta-L-arabinose + (6S)-5,6,7,8-tetrahydrofolate + H(+). The protein operates within nucleotide-sugar biosynthesis; UDP-4-deoxy-4-formamido-beta-L-arabinose biosynthesis; UDP-4-deoxy-4-formamido-beta-L-arabinose from UDP-alpha-D-glucuronate: step 1/3. It functions in the pathway nucleotide-sugar biosynthesis; UDP-4-deoxy-4-formamido-beta-L-arabinose biosynthesis; UDP-4-deoxy-4-formamido-beta-L-arabinose from UDP-alpha-D-glucuronate: step 3/3. It participates in bacterial outer membrane biogenesis; lipopolysaccharide biosynthesis. Bifunctional enzyme that catalyzes the oxidative decarboxylation of UDP-glucuronic acid (UDP-GlcUA) to UDP-4-keto-arabinose (UDP-Ara4O) and the addition of a formyl group to UDP-4-amino-4-deoxy-L-arabinose (UDP-L-Ara4N) to form UDP-L-4-formamido-arabinose (UDP-L-Ara4FN). The modified arabinose is attached to lipid A and is required for resistance to polymyxin and cationic antimicrobial peptides. The chain is Bifunctional polymyxin resistance protein ArnA from Shigella sonnei (strain Ss046).